We begin with the raw amino-acid sequence, 856 residues long: Beta-galactosidase 3 (856 aa).

An N-terminal signal peptide occupies residues 1–31 (MREMGTGDSASRLILWFCLGFLILGVGFVQC). Glu-189 functions as the Proton donor in the catalytic mechanism. Glu-258 acts as the Nucleophile in catalysis. A glycan (N-linked (GlcNAc...) asparagine) is linked at Asn-468. The region spanning 760–846 (TFHRPKVHLK…KRLTVEAVCA (87 aa)) is the SUEL-type lectin domain.

The protein belongs to the glycosyl hydrolase 35 family. As to expression, ubiquitous.

It localises to the secreted. It is found in the extracellular space. The protein localises to the apoplast. It catalyses the reaction Hydrolysis of terminal non-reducing beta-D-galactose residues in beta-D-galactosides.. The sequence is that of Beta-galactosidase 3 (BGAL3) from Arabidopsis thaliana (Mouse-ear cress).